Reading from the N-terminus, the 195-residue chain is GTP cyclohydrolase 1 (195 aa).

Zn(2+) is bound by residues Cys-85, His-88, and Cys-157.

The protein belongs to the GTP cyclohydrolase I family. In terms of assembly, toroid-shaped homodecamer, composed of two pentamers of five dimers.

It carries out the reaction GTP + H2O = 7,8-dihydroneopterin 3'-triphosphate + formate + H(+). Its pathway is cofactor biosynthesis; 7,8-dihydroneopterin triphosphate biosynthesis; 7,8-dihydroneopterin triphosphate from GTP: step 1/1. This is GTP cyclohydrolase 1 from Clostridium acetobutylicum (strain ATCC 824 / DSM 792 / JCM 1419 / IAM 19013 / LMG 5710 / NBRC 13948 / NRRL B-527 / VKM B-1787 / 2291 / W).